The sequence spans 391 residues: Septation protein etd1 (391 aa).

Residues 49 to 68 (MKSYGSDITPRRPKQLGLPK) are disordered.

Functionally, involved in septation. This chain is Septation protein etd1 (etd1), found in Schizosaccharomyces pombe (strain 972 / ATCC 24843) (Fission yeast).